The following is a 194-amino-acid chain: E3 ubiquitin-protein ligase RNF4 (194 aa).

A compositionally biased stretch (basic residues) spans 1 to 12; the sequence is MSTRNPQRKRRG. The required for ubiquitination activity stretch occupies residues 1–20; the sequence is MSTRNPQRKRRGGTVNSRQT. A disordered region spans residues 1 to 39; the sequence is MSTRNPQRKRRGGTVNSRQTQKRTRETTSTPEVSLETEP. A mediates interaction with TRPS1 region spans residues 6 to 65; the sequence is PQRKRRGGTVNSRQTQKRTRETTSTPEVSLETEPIELVETVGDEIVDLTCESLEPVVVDL. The short motif at 40–43 is the SUMO interaction motif 1; mediates the binding to polysumoylated substrates element; the sequence is IELV. Positions 50-53 match the SUMO interaction motif 2; mediates the binding to polysumoylated substrates motif; sequence IVDL. The short motif at 61–63 is the SUMO interaction motif 3; mediates the binding to polysumoylated substrates element; that stretch reads VVV. The short motif at 71–74 is the SUMO interaction motif 4; mediates the binding to polysumoylated substrates element; that stretch reads VVIV. A phosphoserine mark is found at serine 98 and serine 99. A disordered region spans residues 110 to 130; that stretch reads VYVTTHTPRSTKDDGATGPRP. Residues cysteine 136, cysteine 139, cysteine 158, histidine 160, cysteine 163, cysteine 166, cysteine 177, and cysteine 180 each contribute to the Zn(2+) site. The RING-type zinc-finger motif lies at 136–181; that stretch reads CPICMDGYSEIVQNGRLIVSTECGHVFCSQCLRDSLKNANTCPTCR.

In terms of assembly, homodimer (via RING-type zinc finger domain). Interacts with GSC2. Interacts with AR/the androgen receptor and TBP. Interacts with TCF20. Interacts with PATZ1. Interacts with TRPS1; negatively regulates TRPS1 transcriptional repressor activity. Interacts with PML (isoform PML-1, isoform PML-2, isoform PML-3, isoform PML-4, isoform PML-5 and isoform PML-6). Interacts with PRDM1/Blimp-1. Post-translationally, sumoylated; conjugated by one or two SUMO1 moieties. In terms of processing, autoubiquitinated. As to expression, in the embryo, expressed primarily in the developing nervous system with strong expression in the dorsal root ganglia and gonads. Ubiquitously expressed in the adult.

The protein localises to the cytoplasm. It localises to the nucleus. The protein resides in the PML body. It carries out the reaction S-ubiquitinyl-[E2 ubiquitin-conjugating enzyme]-L-cysteine + [acceptor protein]-L-lysine = [E2 ubiquitin-conjugating enzyme]-L-cysteine + N(6)-ubiquitinyl-[acceptor protein]-L-lysine.. Its pathway is protein modification; protein ubiquitination. Its function is as follows. E3 ubiquitin-protein ligase which binds polysumoylated chains covalently attached to proteins and mediates 'Lys-6'-, 'Lys-11'-, 'Lys-48'- and 'Lys-63'-linked polyubiquitination of those substrates and their subsequent targeting to the proteasome for degradation. Regulates the degradation of several proteins including PML and the transcriptional activator PEA3. Involved in chromosome alignment and spindle assembly, it regulates the kinetochore CENPH-CENPI-CENPK complex by targeting polysumoylated CENPI to proteasomal degradation. Regulates the cellular responses to hypoxia and heat shock through degradation of respectively EPAS1 and PARP1. Alternatively, it may also bind DNA/nucleosomes and have a more direct role in the regulation of transcription for instance enhancing basal transcription and steroid receptor-mediated transcriptional activation. Catalyzes ubiquitination of sumoylated PARP1 in response to PARP1 trapping to chromatin, leading to PARP1 removal from chromatin by VCP/p97. This is E3 ubiquitin-protein ligase RNF4 from Mus musculus (Mouse).